A 286-amino-acid polypeptide reads, in one-letter code: Prepilin leader peptidase/N-methyltransferase (286 aa).

The helical transmembrane segment at 11–31 (LGIFFVGLFSLMVGSFLNVVI) threads the bilayer. The Zn(2+) site is built by C74, C77, C99, and C102. A run of 6 helical transmembrane segments spans residues 106–126 (ISAR…IVAF), 132–152 (LSLG…FIDA), 161–181 (LTLP…FINL), 185–205 (VIGA…FKLI), 231–251 (LPII…GIGL), and 257–277 (MPFG…GAQI).

This sequence belongs to the peptidase A24 family. Requires Zn(2+) as cofactor.

It is found in the cell inner membrane. It catalyses the reaction Typically cleaves a -Gly-|-Phe- bond to release an N-terminal, basic peptide of 5-8 residues from type IV prepilin, and then N-methylates the new N-terminal amino group, the methyl donor being S-adenosyl-L-methionine.. Plays an essential role in type IV pili and type II pseudopili formation by proteolytically removing the leader sequence from substrate proteins and subsequently monomethylating the alpha-amino group of the newly exposed N-terminal phenylalanine. The sequence is that of Prepilin leader peptidase/N-methyltransferase (fimP) from Dichelobacter nodosus (Bacteroides nodosus).